The chain runs to 288 residues: MKSIRLIIISGLSGSGKSVALHTLEDQGWYCIDNLPIGLLSAFARHVNDTCPAGGGRYAVGIDARNRPEDLDRIPAILDELQALGLNSEVLFLFASRETLITRFSETRRRHPLSDGDAALADAIAREEALLAPLRARADLTLDTSNTNVHQLRDLVRERIEHDPGRLSLLFQSFGYKHGIPPDADYVFDARCLPNPHWEPRLRPLTGLDAPVQHYLEAQPEVAELTGQIEALIATWLPAFRKAARSYVTVAIGCTGGQHRSVYLAEQLAGRFATGMDAISVRHRELNR.

11 to 18 (GLSGSGKS) serves as a coordination point for ATP. 63-66 (DARN) contributes to the GTP binding site.

Belongs to the RapZ-like family.

In terms of biological role, displays ATPase and GTPase activities. The chain is Nucleotide-binding protein Mlg_2233 from Alkalilimnicola ehrlichii (strain ATCC BAA-1101 / DSM 17681 / MLHE-1).